The sequence spans 1543 residues: DNA-directed RNA polymerase subunit beta' (1543 aa).

The Zn(2+) site is built by Cys-60, Cys-62, Cys-75, and Cys-78. The Mg(2+) site is built by Asp-627, Asp-629, and Asp-631. 4 residues coordinate Zn(2+): Cys-1017, Cys-1097, Cys-1104, and Cys-1107. Disordered regions lie at residues 1466–1490 (PADR…APPR) and 1522–1543 (AEEG…EENV).

It belongs to the RNA polymerase beta' chain family. The RNAP catalytic core consists of 2 alpha, 1 beta, 1 beta' and 1 omega subunit. When a sigma factor is associated with the core the holoenzyme is formed, which can initiate transcription. The cofactor is Mg(2+). Zn(2+) is required as a cofactor.

The catalysed reaction is RNA(n) + a ribonucleoside 5'-triphosphate = RNA(n+1) + diphosphate. In terms of biological role, DNA-dependent RNA polymerase catalyzes the transcription of DNA into RNA using the four ribonucleoside triphosphates as substrates. The polypeptide is DNA-directed RNA polymerase subunit beta' (Herpetosiphon aurantiacus (strain ATCC 23779 / DSM 785 / 114-95)).